The primary structure comprises 143 residues: Large ribosomal subunit protein bL17 (143 aa).

The protein belongs to the bacterial ribosomal protein bL17 family. In terms of assembly, part of the 50S ribosomal subunit. Contacts protein L32.

This Bartonella quintana (strain Toulouse) (Rochalimaea quintana) protein is Large ribosomal subunit protein bL17.